We begin with the raw amino-acid sequence, 94 residues long: Small ribosomal subunit protein uS17 (94 aa).

Belongs to the universal ribosomal protein uS17 family. Part of the 30S ribosomal subunit.

One of the primary rRNA binding proteins, it binds specifically to the 5'-end of 16S ribosomal RNA. This chain is Small ribosomal subunit protein uS17, found in Deinococcus geothermalis (strain DSM 11300 / CIP 105573 / AG-3a).